A 78-amino-acid polypeptide reads, in one-letter code: Delta-conotoxin-like TxMKLT1-0111 (78 aa).

Positions 1-22 (MKLTCMMIVAVLFLTAWTFATA) are cleaved as a signal peptide. Positions 23–49 (DDSGNGLENLFSNAHHQMKNPEASKLN) are excised as a propeptide. 3 disulfides stabilise this stretch: Cys-53–Cys-68, Cys-60–Cys-72, and Cys-67–Cys-77.

The protein belongs to the conotoxin O1 superfamily. In terms of tissue distribution, expressed by the venom duct.

It localises to the secreted. Functionally, delta-conotoxins bind to site 6 of voltage-gated sodium channels (Nav) and inhibit the inactivation process. This chain is Delta-conotoxin-like TxMKLT1-0111, found in Conus textile (Cloth-of-gold cone).